The following is a 319-amino-acid chain: Methionyl-tRNA formyltransferase (319 aa).

Residue 116 to 119 (SLLP) participates in (6S)-5,6,7,8-tetrahydrofolate binding.

The protein belongs to the Fmt family.

It catalyses the reaction L-methionyl-tRNA(fMet) + (6R)-10-formyltetrahydrofolate = N-formyl-L-methionyl-tRNA(fMet) + (6S)-5,6,7,8-tetrahydrofolate + H(+). In terms of biological role, attaches a formyl group to the free amino group of methionyl-tRNA(fMet). The formyl group appears to play a dual role in the initiator identity of N-formylmethionyl-tRNA by promoting its recognition by IF2 and preventing the misappropriation of this tRNA by the elongation apparatus. This Chlorobium phaeovibrioides (strain DSM 265 / 1930) (Prosthecochloris vibrioformis (strain DSM 265)) protein is Methionyl-tRNA formyltransferase.